Consider the following 1489-residue polypeptide: FERM domain-containing protein C (1489 aa).

2 stretches are compositionally biased toward polar residues: residues 59-79 and 103-118; these read DTESNYGGGANSITNTPNFNS and NSPLHKSATRPISTSI. Disordered regions lie at residues 59–86, 103–197, 252–271, and 277–312; these read DTESNYGGGANSITNTPNFNSHRGHQHL, NSPL…PSTL, NSVQNDIVDSDNNNNNNNNN, and EQQQEKQQQQQQHHHHHSTPNKPPKSRSVSISTPDS. Residues 131-153 show a composition bias toward low complexity; that stretch reads SSSSSSSDGDSNSSSDSSDNSSE. The segment covering 163–172 has biased composition (basic residues); the sequence is HLHLHRHHRK. Positions 181 to 195 are enriched in low complexity; it reads FESSSESSEQYGSPS. The stretch at 202–289 forms a coiled coil; the sequence is ALKLEKIMQI…QEKQQQQQQH (88 aa). Low complexity predominate over residues 277–287; the sequence is EQQQEKQQQQQ. A compositionally biased stretch (polar residues) spans 303 to 312; it reads RSVSISTPDS. Residues 356–383 adopt a coiled-coil conformation; the sequence is IKVSKVLEEEMQLQQEFEKQEQLRHSAR. Disordered stretches follow at residues 396–435, 459–479, and 508–569; these read NLQDQQDQQLRKNENSNNNEGDDNNENVSNDNSSDNENQN, VITPPPPAQEPQHQQQPKILT, and EDPL…TTTT. Low complexity predominate over residues 421 to 435; sequence ENVSNDNSSDNENQN. A compositionally biased stretch (polar residues) spans 545–555; the sequence is TASSSSSPTLQ. Residues 556–569 are compositionally biased toward low complexity; it reads ATKTTTTTTTTTTT. Positions 637–934 constitute an FERM domain; sequence ILVHISLVDQ…GYKYFIQHDE (298 aa). LRR repeat units lie at residues 1017 to 1040, 1053 to 1075, 1087 to 1110, 1111 to 1133, 1167 to 1191, 1196 to 1219, 1254 to 1278, 1282 to 1306, 1339 to 1362, 1367 to 1391, 1395 to 1418, 1428 to 1450, and 1451 to 1474; these read KVELPSLNLRGSDLSFIADALKDT, ENLNILSLDLSNNPLLATDAFEP, HLNLKNIGLSNKGVMPLVTIIEKY, PNIETLQIGKNRVNESGVRVILR, NKTIKNLNISKNLITEEGFHHIFEG, SLSLQDLNISGNKINSKLMIKFIK, SCHIKSLDTSYNDLGTSGTKNVIKG, NQTITELSLCANKISSSGCNDLCQS, NKTITTLDLSMNEFSKSSSSAIGT, NETLQEFYLADSSLGAREVESILNG, NSTIKKIFLDTNPIGKKGISSLAN, VITLRHTNLNGKDILELLKQLST, and NIPIKIINLTENTLDKITPQIKNA.

This is FERM domain-containing protein C (frmC) from Dictyostelium discoideum (Social amoeba).